Here is a 190-residue protein sequence, read N- to C-terminus: MEALKEKILKEGKVREGNILKVDCFLNHQMDIKFLNEVGKEFRKRFEGEKVDKILTIEASGIAIAGIASQYFDYVPVVFAKKTESLNLDKDVYESNVHSFTKKKDYKVRVGKQFLNKGERVLIIDDFLAQGCATKGMIDLVEQAGAELVGIGIVIEKGFQDGRKVLEDLGVRVESLAIIDKLEDNKVYFK.

Xanthine is bound by residues leucine 20 and asparagine 27. 129-133 (AQGCA) provides a ligand contact to 5-phospho-alpha-D-ribose 1-diphosphate. Residue lysine 157 participates in xanthine binding.

Belongs to the purine/pyrimidine phosphoribosyltransferase family. Xpt subfamily. As to quaternary structure, homodimer.

It is found in the cytoplasm. It carries out the reaction XMP + diphosphate = xanthine + 5-phospho-alpha-D-ribose 1-diphosphate. Its pathway is purine metabolism; XMP biosynthesis via salvage pathway; XMP from xanthine: step 1/1. In terms of biological role, converts the preformed base xanthine, a product of nucleic acid breakdown, to xanthosine 5'-monophosphate (XMP), so it can be reused for RNA or DNA synthesis. This chain is Xanthine phosphoribosyltransferase 1, found in Clostridium perfringens (strain ATCC 13124 / DSM 756 / JCM 1290 / NCIMB 6125 / NCTC 8237 / Type A).